The chain runs to 384 residues: Queuine tRNA-ribosyltransferase (384 aa).

D92 acts as the Proton acceptor in catalysis. Substrate is bound by residues 92-96 (DSGGF), D146, Q190, and G217. An RNA binding region spans residues 248-254 (GVGRPED). The active-site Nucleophile is the D267. The segment at 272–276 (TRHAR) is RNA binding; important for wobble base 34 recognition. The Zn(2+) site is built by C305, C307, C310, and H337.

Belongs to the queuine tRNA-ribosyltransferase family. In terms of assembly, homodimer. Within each dimer, one monomer is responsible for RNA recognition and catalysis, while the other monomer binds to the replacement base PreQ1. It depends on Zn(2+) as a cofactor.

The enzyme catalyses 7-aminomethyl-7-carbaguanine + guanosine(34) in tRNA = 7-aminomethyl-7-carbaguanosine(34) in tRNA + guanine. It functions in the pathway tRNA modification; tRNA-queuosine biosynthesis. Its function is as follows. Catalyzes the base-exchange of a guanine (G) residue with the queuine precursor 7-aminomethyl-7-deazaguanine (PreQ1) at position 34 (anticodon wobble position) in tRNAs with GU(N) anticodons (tRNA-Asp, -Asn, -His and -Tyr). Catalysis occurs through a double-displacement mechanism. The nucleophile active site attacks the C1' of nucleotide 34 to detach the guanine base from the RNA, forming a covalent enzyme-RNA intermediate. The proton acceptor active site deprotonates the incoming PreQ1, allowing a nucleophilic attack on the C1' of the ribose to form the product. After dissociation, two additional enzymatic reactions on the tRNA convert PreQ1 to queuine (Q), resulting in the hypermodified nucleoside queuosine (7-(((4,5-cis-dihydroxy-2-cyclopenten-1-yl)amino)methyl)-7-deazaguanosine). The protein is Queuine tRNA-ribosyltransferase of Xylella fastidiosa (strain M12).